Consider the following 207-residue polypeptide: Large ribosomal subunit protein bL25 (207 aa).

The protein belongs to the bacterial ribosomal protein bL25 family. CTC subfamily. As to quaternary structure, part of the 50S ribosomal subunit; part of the 5S rRNA/L5/L18/L25 subcomplex. Contacts the 5S rRNA. Binds to the 5S rRNA independently of L5 and L18.

This is one of the proteins that binds to the 5S RNA in the ribosome where it forms part of the central protuberance. The sequence is that of Large ribosomal subunit protein bL25 from Dictyoglomus turgidum (strain DSM 6724 / Z-1310).